The sequence spans 222 residues: MVIHAIVPVKELHRAKQRLARVLDAHERRALSLAMLNDVLVALSYSPVSRIIVIGRDVETGHTARAHGAAFVIDQSAALNDALHQAAADIPDHAAALVAPSDLPLLGAEDVIALTCISGDKPGVAIAPAHDGGTNLLLVSPVVGWTFLFGPDSLTHHIAAARQRHLPVHLLRLPHLERDIDDIDDLIWLAQQPGDTSAQRLARMFLERKGAQLWQSSDMPPH.

Phosphoenolpyruvate-binding residues include threonine 134, glycine 150, and serine 153.

The protein belongs to the CofC family.

It carries out the reaction phosphoenolpyruvate + GTP + H(+) = enolpyruvoyl-2-diphospho-5'-guanosine + diphosphate. Its pathway is cofactor biosynthesis; coenzyme F420 biosynthesis. Functionally, guanylyltransferase that catalyzes the activation of phosphoenolpyruvate (PEP) as enolpyruvoyl-2-diphospho-5'-guanosine, via the condensation of PEP with GTP. It is involved in the biosynthesis of coenzyme F420, a hydride carrier cofactor. This Roseiflexus sp. (strain RS-1) protein is Phosphoenolpyruvate guanylyltransferase.